The chain runs to 185 residues: ATP synthase subunit delta, chloroplastic (185 aa).

It belongs to the ATPase delta chain family. F-type ATPases have 2 components, F(1) - the catalytic core - and F(0) - the membrane proton channel. F(1) has five subunits: alpha(3), beta(3), gamma(1), delta(1), epsilon(1). CF(0) has four main subunits: a(1), b(1), b'(1) and c(10-14). The alpha and beta chains form an alternating ring which encloses part of the gamma chain. F(1) is attached to F(0) by a central stalk formed by the gamma and epsilon chains, while a peripheral stalk is formed by the delta, b and b' chains.

The protein localises to the plastid. Its subcellular location is the chloroplast thylakoid membrane. F(1)F(0) ATP synthase produces ATP from ADP in the presence of a proton or sodium gradient. F-type ATPases consist of two structural domains, F(1) containing the extramembraneous catalytic core and F(0) containing the membrane proton channel, linked together by a central stalk and a peripheral stalk. During catalysis, ATP synthesis in the catalytic domain of F(1) is coupled via a rotary mechanism of the central stalk subunits to proton translocation. Functionally, this protein is part of the stalk that links CF(0) to CF(1). It either transmits conformational changes from CF(0) to CF(1) or is implicated in proton conduction. This chain is ATP synthase subunit delta, chloroplastic, found in Guillardia theta (Cryptophyte).